Reading from the N-terminus, the 487-residue chain is Chromosomal replication initiator protein DnaA (487 aa).

Residues 1 to 79 form a domain I, interacts with DnaA modulators region; that stretch reads MEKSKNIWSL…GYNNIVIVFT (79 aa). Residues 79–142 are domain II; sequence TNQPPKTHSN…EEEPTNFKNP (64 aa). A domain III, AAA+ region region spans residues 143-359; sequence FLKKRYTFEN…AAVTKLKAYI (217 aa). 4 residues coordinate ATP: Gly-187, Gly-189, Lys-190, and Thr-191. A domain IV, binds dsDNA region spans residues 360–487; sequence DLDNIEIDIE…TELMNKIKKN (128 aa).

Belongs to the DnaA family. Oligomerizes as a right-handed, spiral filament on DNA at oriC.

The protein resides in the cytoplasm. Functionally, plays an essential role in the initiation and regulation of chromosomal replication. ATP-DnaA binds to the origin of replication (oriC) to initiate formation of the DNA replication initiation complex once per cell cycle. Binds the DnaA box (a 9 base pair repeat at the origin) and separates the double-stranded (ds)DNA. Forms a right-handed helical filament on oriC DNA; dsDNA binds to the exterior of the filament while single-stranded (ss)DNA is stabiized in the filament's interior. The ATP-DnaA-oriC complex binds and stabilizes one strand of the AT-rich DNA unwinding element (DUE), permitting loading of DNA polymerase. After initiation quickly degrades to an ADP-DnaA complex that is not apt for DNA replication. Binds acidic phospholipids. This is Chromosomal replication initiator protein DnaA from Borreliella burgdorferi (strain ZS7) (Borrelia burgdorferi).